We begin with the raw amino-acid sequence, 493 residues long: Glutamyl-tRNA(Gln) amidotransferase subunit A (493 aa).

Residues lysine 79 and serine 159 each act as charge relay system in the active site. Serine 183 (acyl-ester intermediate) is an active-site residue.

It belongs to the amidase family. GatA subfamily. As to quaternary structure, heterotrimer of A, B and C subunits.

It catalyses the reaction L-glutamyl-tRNA(Gln) + L-glutamine + ATP + H2O = L-glutaminyl-tRNA(Gln) + L-glutamate + ADP + phosphate + H(+). In terms of biological role, allows the formation of correctly charged Gln-tRNA(Gln) through the transamidation of misacylated Glu-tRNA(Gln) in organisms which lack glutaminyl-tRNA synthetase. The reaction takes place in the presence of glutamine and ATP through an activated gamma-phospho-Glu-tRNA(Gln). This Brucella anthropi (strain ATCC 49188 / DSM 6882 / CCUG 24695 / JCM 21032 / LMG 3331 / NBRC 15819 / NCTC 12168 / Alc 37) (Ochrobactrum anthropi) protein is Glutamyl-tRNA(Gln) amidotransferase subunit A.